The sequence spans 118 residues: Small ribosomal subunit protein uS13 (118 aa).

Residues 93-118 (KKLPVRGQRTKTNARTRKGPRKLMKK) form a disordered region.

Belongs to the universal ribosomal protein uS13 family. Part of the 30S ribosomal subunit. Forms a loose heterodimer with protein S19. Forms two bridges to the 50S subunit in the 70S ribosome.

Functionally, located at the top of the head of the 30S subunit, it contacts several helices of the 16S rRNA. In the 70S ribosome it contacts the 23S rRNA (bridge B1a) and protein L5 of the 50S subunit (bridge B1b), connecting the 2 subunits; these bridges are implicated in subunit movement. Contacts the tRNAs in the A and P-sites. The sequence is that of Small ribosomal subunit protein uS13 from Buchnera aphidicola subsp. Baizongia pistaciae (strain Bp).